The chain runs to 572 residues: Cytochrome P450 monooxygenase xilC (572 aa).

Cys515 contacts heme.

The protein belongs to the cytochrome P450 family. It depends on heme as a cofactor.

It participates in secondary metabolite biosynthesis. Its function is as follows. Cytochrome P450 monooxygenase; part of the gene cluster that mediates the biosynthesis of the 6-methyl-2-pyrone derivative xylariolide D. XilC hydroxylates the 5-alkyl-6-methyl-2-pyrone backbone called prexylariolide D, produced by the highly reducing polyketide synthase xilA, on its side chain to form xylariolide D. The sequence is that of Cytochrome P450 monooxygenase xilC from Penicillium crustosum (Blue mold fungus).